A 193-amino-acid polypeptide reads, in one-letter code: dCTP deaminase (193 aa).

DCTP is bound by residues 110 to 115 (RSSLAR), Asp-128, 136 to 138 (VLE), Tyr-171, Lys-178, and Gln-182. Catalysis depends on Glu-138, which acts as the Proton donor/acceptor. A disordered region spans residues 169 to 193 (RPYNSRQDAKYRDQQGAVASRIDKD).

This sequence belongs to the dCTP deaminase family. Homotrimer.

The enzyme catalyses dCTP + H2O + H(+) = dUTP + NH4(+). Its pathway is pyrimidine metabolism; dUMP biosynthesis; dUMP from dCTP (dUTP route): step 1/2. Functionally, catalyzes the deamination of dCTP to dUTP. This Serratia proteamaculans (strain 568) protein is dCTP deaminase.